The primary structure comprises 1649 residues: eIF-2-alpha kinase GCN2 (1649 aa).

Disordered regions lie at residues 1–25 (MAGGRGAPGRGRDEPPESYPQRQDH), 138–158 (NKPPPKSFHEEMLERRAQEEQ), and 227–256 (HGGSPDFVGNGKHRANSSGRSRRERQYSVC). The RWD domain occupies 25–137 (HELQALEAIY…YHVQSFLSEH (113 aa)). The stretch at 146 to 205 (HEEMLERRAQEEQQRLLEAKRKEEQEQREILHEIQRRKEEIKEEKKRKEMAKQERLEIAS) forms a coiled coil. Phosphoserine is present on S230. The segment covering 237–249 (GKHRANSSGRSRR) has biased composition (basic residues). Protein kinase domains lie at 296-539 (VYNA…HSFI) and 590-1001 (FEEL…SELL). ATP contacts are provided by residues 596–604 (LGKGAFGAV) and K619. Disordered regions lie at residues 660–750 (ERPA…QSFL) and 766–788 (ENSKSQNQDEDCNEKNGCHESEP). Position 667 is a phosphothreonine (T667). Positions 705–717 (LSSSVEWSTSGER) are enriched in polar residues. The span at 731 to 740 (SDDEDDDEDE) shows a compositional bias: acidic residues. Over residues 778-787 (NEKNGCHESE) the composition is skewed to basic and acidic residues. D848 (proton acceptor) is an active-site residue. T871 carries the post-translational modification Phosphothreonine. Phosphothreonine; by autocatalysis occurs at positions 899 and 904. A histidyl-tRNA synthetase-like region spans residues 1022 to 1493 (VDGKAYRTMM…DHVLQKLRTK (472 aa)). K1259 carries the post-translational modification N6-acetyllysine.

The protein belongs to the protein kinase superfamily. Ser/Thr protein kinase family. GCN2 subfamily. Homodimer; homodimerization is important for kinase activation by uncharged tRNAs. Interacts with GCN1; this interaction stimulates EIF2AK4/GCN2 kinase activity and is impaired by IMPACT upon a variety of stress conditions, such as amino acid depletion, UV-C irradiation, proteasome inhibitor treatment and glucose deprivation. Interacts with DNAJC3; this interaction inhibits EIF2AK4/GCN2 kinase activity during endoplasmic reticulum (ER), hypothermic and amino acid-starving stress conditions. Interacts with MAP3K20; activates EIF2AK4/GCN2 kinase activity in response to moderate ribotoxic stress. In terms of assembly, (Microbial infection) Interacts with hepatitis E virus (HEV) ORF1 protease; this interaction inhibits dimerization of EIF2AK4 and prevents EIF2AK4-mediated phosphorylation of EIF2A. Post-translationally, autophosphorylated; autophosphorylation on Thr-899 is increased upon amino acid starvation and in UV irradiation cells and inhibited in presence of IMPACT. In terms of tissue distribution, widely expressed. Expressed in lung, smooth muscle cells and macrophages.

The protein localises to the cytoplasm. It catalyses the reaction L-seryl-[protein] + ATP = O-phospho-L-seryl-[protein] + ADP + H(+). The enzyme catalyses L-threonyl-[protein] + ATP = O-phospho-L-threonyl-[protein] + ADP + H(+). Metabolic-stress sensing protein kinase that phosphorylates the alpha subunit of eukaryotic translation initiation factor 2 (EIF2S1/eIF-2-alpha) in response to low amino acid availability. Plays a role as an activator of the integrated stress response (ISR) required for adaptation to amino acid starvation. EIF2S1/eIF-2-alpha phosphorylation in response to stress converts EIF2S1/eIF-2-alpha into a global protein synthesis inhibitor, leading to a global attenuation of cap-dependent translation, and thus to a reduced overall utilization of amino acids, while concomitantly initiating the preferential translation of ISR-specific mRNAs, such as the transcriptional activator ATF4, and hence allowing ATF4-mediated reprogramming of amino acid biosynthetic gene expression to alleviate nutrient depletion. Binds uncharged tRNAs. Required for the translational induction of protein kinase PRKCH following amino acid starvation. Involved in cell cycle arrest by promoting cyclin D1 mRNA translation repression after the unfolded protein response pathway (UPR) activation or cell cycle inhibitor CDKN1A/p21 mRNA translation activation in response to amino acid deprivation. Plays a role in the consolidation of synaptic plasticity, learning as well as formation of long-term memory. Plays a role in neurite outgrowth inhibition. Plays a proapoptotic role in response to glucose deprivation. Promotes global cellular protein synthesis repression in response to UV irradiation independently of the stress-activated protein kinase/c-Jun N-terminal kinase (SAPK/JNK) and p38 MAPK signaling pathways. Plays a role in the antiviral response against alphavirus infection; impairs early viral mRNA translation of the incoming genomic virus RNA, thus preventing alphavirus replication. In terms of biological role, (Microbial infection) Plays a role in modulating the adaptive immune response to yellow fever virus infection; promotes dendritic cells to initiate autophagy and antigene presentation to both CD4(+) and CD8(+) T-cells under amino acid starvation. This chain is eIF-2-alpha kinase GCN2, found in Homo sapiens (Human).